We begin with the raw amino-acid sequence, 94 residues long: Defensin-7 (94 aa).

The N-terminal stretch at M1–A19 is a signal peptide. Intrachain disulfides connect C65–C93 and C72–C92.

Belongs to the alpha-defensin family.

The protein resides in the secreted. Functionally, has antimicrobial activity. In Pan troglodytes (Chimpanzee), this protein is Defensin-7 (DEFA7).